A 122-amino-acid chain; its full sequence is Large ribosomal subunit protein uL14 (122 aa).

The protein belongs to the universal ribosomal protein uL14 family. In terms of assembly, part of the 50S ribosomal subunit. Forms a cluster with proteins L3 and L19. In the 70S ribosome, L14 and L19 interact and together make contacts with the 16S rRNA in bridges B5 and B8.

Functionally, binds to 23S rRNA. Forms part of two intersubunit bridges in the 70S ribosome. In Syntrophobacter fumaroxidans (strain DSM 10017 / MPOB), this protein is Large ribosomal subunit protein uL14.